Here is a 143-residue protein sequence, read N- to C-terminus: Hemoglobin-1 (143 aa).

S2 bears the N-acetylserine mark. A Globin domain is found at 2 to 143 (SLSAAQKDNV…ALMGMIRPNM (142 aa)). H97 is a binding site for heme b.

It belongs to the globin family. As to quaternary structure, monomer.

The protein resides in the cytoplasm. Its function is as follows. Serves to transport hydrogen sulfide to autotrophic bacteria. The protein is Hemoglobin-1 of Phacoides pectinatus (Thick lucine).